Reading from the N-terminus, the 763-residue chain is Phosphoglycerol transferase I (763 aa).

4 helical membrane-spanning segments follow: residues 4 to 19 (LLSV…IYAW), 26 to 48 (WWFA…LYAS), 76 to 98 (YILP…GWVL), and 110 to 132 (YSLL…RQIT).

This sequence belongs to the OpgB family.

It is found in the cell inner membrane. It carries out the reaction a phosphatidylglycerol + a membrane-derived-oligosaccharide D-glucose = a 1,2-diacyl-sn-glycerol + a membrane-derived-oligosaccharide 6-(glycerophospho)-D-glucose.. The protein operates within glycan metabolism; osmoregulated periplasmic glucan (OPG) biosynthesis. Transfers a phosphoglycerol residue from phosphatidylglycerol to the membrane-bound nascent glucan backbones. The protein is Phosphoglycerol transferase I of Salmonella typhi.